A 494-amino-acid polypeptide reads, in one-letter code: Probable malate:quinone oxidoreductase (494 aa).

Belongs to the MQO family. It depends on FAD as a cofactor.

The catalysed reaction is (S)-malate + a quinone = a quinol + oxaloacetate. Its pathway is carbohydrate metabolism; tricarboxylic acid cycle; oxaloacetate from (S)-malate (quinone route): step 1/1. This Micrococcus luteus (strain ATCC 4698 / DSM 20030 / JCM 1464 / CCM 169 / CCUG 5858 / IAM 1056 / NBRC 3333 / NCIMB 9278 / NCTC 2665 / VKM Ac-2230) (Micrococcus lysodeikticus) protein is Probable malate:quinone oxidoreductase.